We begin with the raw amino-acid sequence, 215 residues long: Adenylate kinase (215 aa).

10 to 15 is a binding site for ATP; sequence GAGKGT. The segment at 30-59 is NMP; it reads STGDMFRAAMKNETEMGKLAKSFIDKGELV. Residues threonine 31, arginine 36, 57 to 59, 86 to 89, and glutamine 93 each bind AMP; these read ELV and GYPR. The interval 127 to 165 is LID; it reads GRYICRNCGATYHKIFNPTKVEGVCDVCGSHDLYQRADD. Arginine 128 lines the ATP pocket. Zn(2+) contacts are provided by cysteine 131 and cysteine 134. Residue 137–138 coordinates ATP; that stretch reads TY. Zn(2+) is bound by residues cysteine 151 and cysteine 154. AMP is bound by residues arginine 162 and arginine 173. Glutamine 201 contributes to the ATP binding site.

Belongs to the adenylate kinase family. In terms of assembly, monomer.

The protein localises to the cytoplasm. The enzyme catalyses AMP + ATP = 2 ADP. The protein operates within purine metabolism; AMP biosynthesis via salvage pathway; AMP from ADP: step 1/1. Catalyzes the reversible transfer of the terminal phosphate group between ATP and AMP. Plays an important role in cellular energy homeostasis and in adenine nucleotide metabolism. This is Adenylate kinase from Lactococcus lactis subsp. lactis (strain IL1403) (Streptococcus lactis).